We begin with the raw amino-acid sequence, 398 residues long: Yellow-related salivary protein SP04 (398 aa).

The N-terminal stretch at 1-18 (MKWFLFLLSTIFVQGILG) is a signal peptide. Positions 73 to 94 (TLTEIERKKHPERSPPLSKFSG) are disordered. The segment covering 75 to 85 (TEIERKKHPER) has biased composition (basic and acidic residues).

Belongs to the major royal jelly protein family. As to expression, female salivary gland (at protein level).

Its subcellular location is the secreted. Functionally, probably modulates blood feeding of sand flies on vertebrate species by binding and sequestering different mediators involved in the host response. Binds biogenic amines. Binds serotonin with high affinity. Binds histamine with low affinity. This is Yellow-related salivary protein SP04 from Phlebotomus argentipes (Phlebotomine sand fly).